A 533-amino-acid chain; its full sequence is GMP synthase [glutamine-hydrolyzing] (533 aa).

A Glutamine amidotransferase type-1 domain is found at 22–215 (RILILDFGSQ…THNVAGCSGT (194 aa)). Cysteine 99 serves as the catalytic Nucleophile. Catalysis depends on residues histidine 189 and glutamate 191. The region spanning 216-408 (WTMAGFRELE…LGIPESIVGR (193 aa)) is the GMPS ATP-PPase domain. 243–249 (SGGVDSS) contacts ATP.

As to quaternary structure, homodimer.

The enzyme catalyses XMP + L-glutamine + ATP + H2O = GMP + L-glutamate + AMP + diphosphate + 2 H(+). It participates in purine metabolism; GMP biosynthesis; GMP from XMP (L-Gln route): step 1/1. Its function is as follows. Catalyzes the synthesis of GMP from XMP. In Gluconobacter oxydans (strain 621H) (Gluconobacter suboxydans), this protein is GMP synthase [glutamine-hydrolyzing].